A 238-amino-acid chain; its full sequence is 2,3,4,5-tetrahydropyridine-2,6-dicarboxylate N-acetyltransferase (238 aa).

The protein belongs to the transferase hexapeptide repeat family. DapH subfamily.

It catalyses the reaction (S)-2,3,4,5-tetrahydrodipicolinate + acetyl-CoA + H2O = L-2-acetamido-6-oxoheptanedioate + CoA. It functions in the pathway amino-acid biosynthesis; L-lysine biosynthesis via DAP pathway; LL-2,6-diaminopimelate from (S)-tetrahydrodipicolinate (acetylase route): step 1/3. Functionally, catalyzes the transfer of an acetyl group from acetyl-CoA to tetrahydrodipicolinate. This chain is 2,3,4,5-tetrahydropyridine-2,6-dicarboxylate N-acetyltransferase, found in Pseudothermotoga lettingae (strain ATCC BAA-301 / DSM 14385 / NBRC 107922 / TMO) (Thermotoga lettingae).